The following is a 153-amino-acid chain: H/ACA ribonucleoprotein complex subunit 2 (153 aa).

Residue lysine 3 forms a Glycyl lysine isopeptide (Lys-Gly) (interchain with G-Cter in SUMO2) linkage. Lysine 5 is covalently cross-linked (Glycyl lysine isopeptide (Lys-Gly) (interchain with G-Cter in SUMO); alternate). A Glycyl lysine isopeptide (Lys-Gly) (interchain with G-Cter in SUMO1); alternate cross-link involves residue lysine 5. A Glycyl lysine isopeptide (Lys-Gly) (interchain with G-Cter in SUMO2); alternate cross-link involves residue lysine 5. Serine 19 bears the Phosphoserine mark.

It belongs to the eukaryotic ribosomal protein eL8 family. Part of the H/ACA small nucleolar ribonucleoprotein (H/ACA snoRNP) complex, which contains NHP2/NOLA2, GAR1/NOLA1, NOP10/NOLA3, and DKC1/NOLA4, which is presumed to be the catalytic subunit. The complex contains a stable core formed by binding of one or two NOP10-DKC1 heterodimers to NHP2; GAR1 subsequently binds to this core via DKC1. The complex binds a box H/ACA small nucleolar RNA (snoRNA), which may target the specific site of modification within the RNA substrate. During assembly, the complex contains NAF1 instead of GAR1/NOLA1. The complex also interacts with TERC, which contains a 3'-terminal domain related to the box H/ACA snoRNAs. Specific interactions with snoRNAs or TERC are mediated by GAR1 and NHP2. Associates with NOLC1/NOPP140. H/ACA snoRNPs interact with the SMN complex, consisting of SMN1 or SMN2, GEMIN2/SIP1, DDX20/GEMIN3, and GEMIN4. This is mediated by interaction between GAR1 and SMN1 or SMN2. The SMN complex may be required for correct assembly of the H/ACA snoRNP complex. Component of the telomerase holoenzyme complex composed of one molecule of TERT, one molecule of WRAP53/TCAB1, two molecules of H/ACA ribonucleoprotein complex subunits DKC1, NOP10, NHP2 and GAR1, and a telomerase RNA template component (TERC). The telomerase holoenzyme complex is associated with TEP1, SMG6/EST1A and POT1. As to expression, expressed in brain, colon, heart, kidney, ovary, pancreas, placenta, prostate, skeletal muscle, small intestine, spleen, testis and thymus. Also expressed at lower levels in the liver.

The protein resides in the nucleus. Its subcellular location is the nucleolus. The protein localises to the cajal body. Its function is as follows. Required for ribosome biogenesis and telomere maintenance. Part of the H/ACA small nucleolar ribonucleoprotein (H/ACA snoRNP) complex, which catalyzes pseudouridylation of rRNA. This involves the isomerization of uridine such that the ribose is subsequently attached to C5, instead of the normal N1. Each rRNA can contain up to 100 pseudouridine ('psi') residues, which may serve to stabilize the conformation of rRNAs. May also be required for correct processing or intranuclear trafficking of TERC, the RNA component of the telomerase reverse transcriptase (TERT) holoenzyme. In Homo sapiens (Human), this protein is H/ACA ribonucleoprotein complex subunit 2 (NHP2).